The sequence spans 248 residues: Phosphatidylserine decarboxylase proenzyme (248 aa).

Serine 206 acts as the Schiff-base intermediate with substrate; via pyruvic acid in catalysis. Residue serine 206 is modified to Pyruvic acid (Ser); by autocatalysis.

The protein belongs to the phosphatidylserine decarboxylase family. PSD-A subfamily. In terms of assembly, heterodimer of a large membrane-associated beta subunit and a small pyruvoyl-containing alpha subunit. Pyruvate serves as cofactor. Is synthesized initially as an inactive proenzyme. Formation of the active enzyme involves a self-maturation process in which the active site pyruvoyl group is generated from an internal serine residue via an autocatalytic post-translational modification. Two non-identical subunits are generated from the proenzyme in this reaction, and the pyruvate is formed at the N-terminus of the alpha chain, which is derived from the carboxyl end of the proenzyme. The post-translation cleavage follows an unusual pathway, termed non-hydrolytic serinolysis, in which the side chain hydroxyl group of the serine supplies its oxygen atom to form the C-terminus of the beta chain, while the remainder of the serine residue undergoes an oxidative deamination to produce ammonia and the pyruvoyl prosthetic group on the alpha chain.

It localises to the cell membrane. The enzyme catalyses a 1,2-diacyl-sn-glycero-3-phospho-L-serine + H(+) = a 1,2-diacyl-sn-glycero-3-phosphoethanolamine + CO2. The protein operates within phospholipid metabolism; phosphatidylethanolamine biosynthesis; phosphatidylethanolamine from CDP-diacylglycerol: step 2/2. Its function is as follows. Catalyzes the formation of phosphatidylethanolamine (PtdEtn) from phosphatidylserine (PtdSer). This Nitrobacter hamburgensis (strain DSM 10229 / NCIMB 13809 / X14) protein is Phosphatidylserine decarboxylase proenzyme.